A 418-amino-acid chain; its full sequence is Gamma-glutamyl phosphate reductase (418 aa).

It belongs to the gamma-glutamyl phosphate reductase family.

The protein resides in the cytoplasm. The catalysed reaction is L-glutamate 5-semialdehyde + phosphate + NADP(+) = L-glutamyl 5-phosphate + NADPH + H(+). The protein operates within amino-acid biosynthesis; L-proline biosynthesis; L-glutamate 5-semialdehyde from L-glutamate: step 2/2. In terms of biological role, catalyzes the NADPH-dependent reduction of L-glutamate 5-phosphate into L-glutamate 5-semialdehyde and phosphate. The product spontaneously undergoes cyclization to form 1-pyrroline-5-carboxylate. This chain is Gamma-glutamyl phosphate reductase, found in Clostridium kluyveri (strain NBRC 12016).